A 701-amino-acid polypeptide reads, in one-letter code: Polyribonucleotide nucleotidyltransferase (701 aa).

Mg(2+) contacts are provided by Asp-490 and Asp-496. One can recognise a KH domain in the interval 557 to 616 (PKVETMTIKPEKIRDVIGPGGKKINEIIDETGVKLDIEQDGTIFIGAVDQDMINRAREII). The S1 motif domain maps to 626 to 694 (GQVYNAKVRR…DKGRVNASHR (69 aa)).

The protein belongs to the polyribonucleotide nucleotidyltransferase family. Requires Mg(2+) as cofactor.

The protein resides in the cytoplasm. The catalysed reaction is RNA(n+1) + phosphate = RNA(n) + a ribonucleoside 5'-diphosphate. In terms of biological role, involved in mRNA degradation. Catalyzes the phosphorolysis of single-stranded polyribonucleotides processively in the 3'- to 5'-direction. This Staphylococcus carnosus (strain TM300) protein is Polyribonucleotide nucleotidyltransferase.